Here is a 171-residue protein sequence, read N- to C-terminus: RxLR effector protein CRE7 (171 aa).

Residues 1-23 (MRAIAILLAVVATIFASLHGVSA) form the signal peptide. A RxLR-dEER motif is present at residues 46–59 (RRLRQTGDASDEER).

This sequence belongs to the RxLR effector family.

It localises to the secreted. Its subcellular location is the host cell. Its function is as follows. Effector that is involved in host plant infection. Contributes to virulence during the early infection stage, by inhibiting plant defense responses induced by both PAMP-triggered immunity (PTI) and effector-triggered immunity (ETI). The sequence is that of RxLR effector protein CRE7 from Phytophthora infestans (strain T30-4) (Potato late blight agent).